A 695-amino-acid chain; its full sequence is G-protein coupled receptor-associated protein LMBRD2 (695 aa).

Over 1–5 the chain is Extracellular; the sequence is MSGAA. Residues 6–21 traverse the membrane as a helical segment; the sequence is LGLEIVFVFFLALFLL. Topologically, residues 22–32 are cytoplasmic; it reads HRYGDFKKQHR. The chain crosses the membrane as a helical span at residues 33–53; sequence LVIIGTLLAWYLCFLIVFILP. The Extracellular segment spans residues 54–105; that stretch reads LDVSTTIYNRCKHAAANSSPPENSNITGLYATANPVPSQHPCFKPWSYIPDG. N-linked (GlcNAc...) asparagine glycosylation is present at asparagine 78. Residues 106–126 traverse the membrane as a helical segment; that stretch reads IMPIFWRVVYWTSQFLTWILL. Residues 127-150 are Cytoplasmic-facing; it reads PFMQSYARSGGFSITGKIKTALIE. Residues 151 to 171 form a helical membrane-spanning segment; it reads NAIYYGTYLLIFGAFLIYVAV. Residues 172–186 lie on the Extracellular side of the membrane; sequence NPHLHLEWNQLQTIG. Residues 187–207 traverse the membrane as a helical segment; the sequence is IAAANTWGLFLLVLLLGYGLV. Residues 208-387 lie on the Cytoplasmic side of the membrane; sequence EIPRSYWNGA…ECLLRPWFYK (180 aa). A coiled-coil region spans residues 227–262; it reads YFKAAKLMTEKADAEENLEDAMEEVRKVNESIKYNH. The chain crosses the membrane as a helical span at residues 388–408; it reads ILAVVLSIFSVIVVWSECTFF. Residues 409 to 432 are Extracellular-facing; that stretch reads STTPVLSLFAVFIQLAEKTYNYIY. Residues 433 to 453 traverse the membrane as a helical segment; it reads IEIACFLSIFFLSICVYSTVF. The Cytoplasmic segment spans residues 454–473; sequence RIRVFNYYYLASHHQTDAYS. Residues 474–494 form a helical membrane-spanning segment; sequence LLFSGMLFCRLTPPLCLNFLG. Residues 495–521 lie on the Extracellular side of the membrane; that stretch reads LTHMDSSISHKNTQPTAYTSIMGSMKV. The chain crosses the membrane as a helical span at residues 522–542; that stretch reads LSFIADGFYIYYPMLVVILCI. Residues 543–695 are Cytoplasmic-facing; sequence ATYFSLGTRC…MSRSDIFNDV (153 aa). Residues 571 to 603 adopt a coiled-coil conformation; that stretch reads LVNEGKELIRKEKRKRQRQEEGENRRREWKERY. The disordered stretch occupies residues 581–628; sequence KEKRKRQRQEEGENRRREWKERYGHNREDSTRNRNIHTDPKESNFSDV. Residues 588–624 show a composition bias toward basic and acidic residues; that stretch reads RQEEGENRRREWKERYGHNREDSTRNRNIHTDPKESN. At serine 633 the chain carries Phosphoserine. Residues 662 to 682 are disordered; that stretch reads AETFTDDPLESESGRYQPGGR.

The protein belongs to the LIMR family.

Its subcellular location is the cell membrane. Its function is as follows. Recruited to ligand-activated beta-2 adrenergic receptor/ADRB2, it negatively regulates the adrenergic receptor signaling pathway. May also regulate other G-protein coupled receptors including type-1 angiotensin II receptor/AGTR1. The sequence is that of G-protein coupled receptor-associated protein LMBRD2 from Homo sapiens (Human).